Consider the following 153-residue polypeptide: Myoglobin (153 aa).

The region spanning 2–147 is the Globin domain; it reads GLNDQEWQQV…FRNDMASKYK (146 aa). A nitrite-binding site is contributed by histidine 65. Residue histidine 65 participates in O2 binding. Heme b is bound at residue histidine 93.

The protein belongs to the globin family. In terms of assembly, monomeric.

The protein resides in the cytoplasm. Its subcellular location is the sarcoplasm. The enzyme catalyses Fe(III)-heme b-[protein] + nitric oxide + H2O = Fe(II)-heme b-[protein] + nitrite + 2 H(+). It catalyses the reaction H2O2 + AH2 = A + 2 H2O. In terms of biological role, monomeric heme protein which primary function is to store oxygen and facilitate its diffusion within muscle tissues. Reversibly binds oxygen through a pentacoordinated heme iron and enables its timely and efficient release as needed during periods of heightened demand. Depending on the oxidative conditions of tissues and cells, and in addition to its ability to bind oxygen, it also has a nitrite reductase activity whereby it regulates the production of bioactive nitric oxide. Under stress conditions, like hypoxia and anoxia, it also protects cells against reactive oxygen species thanks to its pseudoperoxidase activity. This Aptenodytes forsteri (Emperor penguin) protein is Myoglobin (MB).